Here is a 415-residue protein sequence, read N- to C-terminus: MVWNRSLAETDPEIARAIALEITRQGAKLELIASENFVSRAVLEAQGSVLTNKYAEGYPGARYYGGCEYVDIVESVAIRRAKEIFGAGHANVQPHSGAQANMAAYFAFLEPGDTIMGMRLAHGGHLTHGAKINFSGRYFRYVPYGVEEETGRIDYDRMHAIAREHRPKLIVGGASAYPRELDFARMRAIADDVGALLMIDMAHIAGLIAAGLHMSPVPYADVVTTTTHKTLRGPRGGMILCPEEYAAAIDKAVFPGIQGGPLMHVIAAKAVALGEAQRPEFKTYQEQIVKNARALAQALQERGFELVAGGTDTHLILVDLRNKGLTGAVAEDLLDRVDVTVNKNMVPFDPQPPRVTSGIRIGTPAVTTRGMKEDSMVQIAEVISLTLDHPEEGAVQARAKAIVAELCAAHPFLKL.

(6S)-5,6,7,8-tetrahydrofolate contacts are provided by residues L120 and 124–126 (GHL). K229 carries the N6-(pyridoxal phosphate)lysine modification.

This sequence belongs to the SHMT family. In terms of assembly, homodimer. Pyridoxal 5'-phosphate is required as a cofactor.

It is found in the cytoplasm. It catalyses the reaction (6R)-5,10-methylene-5,6,7,8-tetrahydrofolate + glycine + H2O = (6S)-5,6,7,8-tetrahydrofolate + L-serine. It functions in the pathway one-carbon metabolism; tetrahydrofolate interconversion. The protein operates within amino-acid biosynthesis; glycine biosynthesis; glycine from L-serine: step 1/1. Catalyzes the reversible interconversion of serine and glycine with tetrahydrofolate (THF) serving as the one-carbon carrier. This reaction serves as the major source of one-carbon groups required for the biosynthesis of purines, thymidylate, methionine, and other important biomolecules. Also exhibits THF-independent aldolase activity toward beta-hydroxyamino acids, producing glycine and aldehydes, via a retro-aldol mechanism. This is Serine hydroxymethyltransferase from Desulforudis audaxviator (strain MP104C).